We begin with the raw amino-acid sequence, 252 residues long: Ribosomal RNA small subunit methyltransferase J (252 aa).

S-adenosyl-L-methionine-binding positions include 101–102 (RD), 117–118 (ER), 153–154 (SS), and aspartate 171.

This sequence belongs to the methyltransferase superfamily. RsmJ family.

The protein localises to the cytoplasm. It catalyses the reaction guanosine(1516) in 16S rRNA + S-adenosyl-L-methionine = N(2)-methylguanosine(1516) in 16S rRNA + S-adenosyl-L-homocysteine + H(+). In terms of biological role, specifically methylates the guanosine in position 1516 of 16S rRNA. The sequence is that of Ribosomal RNA small subunit methyltransferase J from Salmonella typhi.